The following is a 354-amino-acid chain: D-alanine--D-alanine ligase (354 aa).

Positions 154–348 constitute an ATP-grasp domain; it reads RSWFLTNNIN…FTNLIEEIIK (195 aa). 181-232 contributes to the ATP binding site; it reads MKRPYVIKPITQGSSIGIEVIFEEDDFNFANYDFPYGDQVIIEKYIKGRELQ. Residues glutamate 301, glutamate 315, and asparagine 317 each contribute to the Mg(2+) site.

It belongs to the D-alanine--D-alanine ligase family. The cofactor is Mg(2+). It depends on Mn(2+) as a cofactor.

Its subcellular location is the cytoplasm. The enzyme catalyses 2 D-alanine + ATP = D-alanyl-D-alanine + ADP + phosphate + H(+). It participates in cell wall biogenesis; peptidoglycan biosynthesis. Functionally, cell wall formation. The sequence is that of D-alanine--D-alanine ligase from Rickettsia canadensis (strain McKiel).